Reading from the N-terminus, the 956-residue chain is GAS2-like protein 2B (956 aa).

A Calponin-homology (CH) domain is found at 23–150; sequence YAMKEDLAEW…CLLELARRAS (128 aa). The GAR domain maps to 191 to 263; the sequence is CDFKNLDQMV…HYLDKHDPCH (73 aa). Composition is skewed to polar residues over residues 332–353 and 381–390; these read SSSY…QTPP and DPQQLGNPQS. Disordered regions lie at residues 332–361, 378–406, 853–885, and 914–956; these read SSSY…SMSI, DTQD…ASQL, RPKI…SRNN, and VNSE…ESWV. The span at 859 to 868 shows a compositional bias: basic and acidic residues; sequence RRDNRPEKKP.

Belongs to the GAS2 family.

Its subcellular location is the cytoplasm. It is found in the cytoskeleton. It localises to the cilium basal body. In terms of biological role, together with gas2l2.L, regulates ciliary orientation and performance. The polypeptide is GAS2-like protein 2B (Xenopus laevis (African clawed frog)).